The following is a 63-amino-acid chain: Cytochrome b-c1 complex subunit 9 (63 aa).

At 2 to 21 the chain is on the mitochondrial matrix side; the sequence is AAATLTSKLYSLLFRRTSTF. Residues 22–47 form a helical membrane-spanning segment; that stretch reads ALTIIVGVMFFERAFDQGADAIYDHI. Over 48–63 the chain is Mitochondrial intermembrane; sequence NEGKLWKHIKHKYENK.

It belongs to the UQCR10/QCR9 family. Component of the ubiquinol-cytochrome c oxidoreductase (cytochrome b-c1 complex, complex III, CIII), a multisubunit enzyme composed of 11 subunits. The complex is composed of 3 respiratory subunits cytochrome b, cytochrome c1 and Rieske protein UQCRFS1, 2 core protein subunits UQCRC1/QCR1 and UQCRC2/QCR2, and 6 low-molecular weight protein subunits UQCRH/QCR6, UQCRB/QCR7, UQCRQ/QCR8, UQCR10/QCR9, UQCR11/QCR10 and subunit 9, the cleavage product of Rieske protein UQCRFS1. The complex exists as an obligatory dimer and forms supercomplexes (SCs) in the inner mitochondrial membrane with NADH-ubiquinone oxidoreductase (complex I, CI) and cytochrome c oxidase (complex IV, CIV), resulting in different assemblies (supercomplex SCI(1)III(2)IV(1) and megacomplex MCI(2)III(2)IV(2)). Interacts with STMP1.

It is found in the mitochondrion inner membrane. Its function is as follows. Component of the ubiquinol-cytochrome c oxidoreductase, a multisubunit transmembrane complex that is part of the mitochondrial electron transport chain which drives oxidative phosphorylation. The respiratory chain contains 3 multisubunit complexes succinate dehydrogenase (complex II, CII), ubiquinol-cytochrome c oxidoreductase (cytochrome b-c1 complex, complex III, CIII) and cytochrome c oxidase (complex IV, CIV), that cooperate to transfer electrons derived from NADH and succinate to molecular oxygen, creating an electrochemical gradient over the inner membrane that drives transmembrane transport and the ATP synthase. The cytochrome b-c1 complex catalyzes electron transfer from ubiquinol to cytochrome c, linking this redox reaction to translocation of protons across the mitochondrial inner membrane, with protons being carried across the membrane as hydrogens on the quinol. In the process called Q cycle, 2 protons are consumed from the matrix, 4 protons are released into the intermembrane space and 2 electrons are passed to cytochrome c. This Homo sapiens (Human) protein is Cytochrome b-c1 complex subunit 9 (UQCR10).